Consider the following 100-residue polypeptide: MGKKDYWVVWRINIDSTVSRSNGRVVPRQLAVDKPTLEEIAKAASMLGLKYEAHPEKKHPRHWFEEDYVGCIYVYKVDDYSRRSLIKKLAQIVKSSRRGG.

It belongs to the SRP19 family. In terms of assembly, part of the signal recognition particle protein translocation system, which is composed of SRP and FtsY. Archaeal SRP consists of a 7S RNA molecule of 300 nucleotides and two protein subunits: SRP54 and SRP19.

It localises to the cytoplasm. Involved in targeting and insertion of nascent membrane proteins into the cytoplasmic membrane. Binds directly to 7S RNA and mediates binding of the 54 kDa subunit of the SRP. This chain is Signal recognition particle 19 kDa protein, found in Caldivirga maquilingensis (strain ATCC 700844 / DSM 13496 / JCM 10307 / IC-167).